The following is a 376-amino-acid chain: Actin, cytoplasmic (376 aa).

Belongs to the actin family.

Its subcellular location is the cytoplasm. It is found in the cytoskeleton. It catalyses the reaction ATP + H2O = ADP + phosphate + H(+). Its function is as follows. Actins are highly conserved proteins that are involved in various types of cell motility and are ubiquitously expressed in all eukaryotic cells. The polypeptide is Actin, cytoplasmic (Tetrahymena pyriformis).